A 189-amino-acid chain; its full sequence is Translation initiation factor IF-3 (189 aa).

Belongs to the IF-3 family. As to quaternary structure, monomer.

The protein resides in the cytoplasm. Functionally, IF-3 binds to the 30S ribosomal subunit and shifts the equilibrium between 70S ribosomes and their 50S and 30S subunits in favor of the free subunits, thus enhancing the availability of 30S subunits on which protein synthesis initiation begins. This is Translation initiation factor IF-3 from Corynebacterium glutamicum (strain ATCC 13032 / DSM 20300 / JCM 1318 / BCRC 11384 / CCUG 27702 / LMG 3730 / NBRC 12168 / NCIMB 10025 / NRRL B-2784 / 534).